Here is a 254-residue protein sequence, read N- to C-terminus: Imidazole glycerol phosphate synthase subunit HisF (254 aa).

Residues aspartate 11 and aspartate 130 contribute to the active site.

The protein belongs to the HisA/HisF family. Heterodimer of HisH and HisF.

The protein localises to the cytoplasm. The enzyme catalyses 5-[(5-phospho-1-deoxy-D-ribulos-1-ylimino)methylamino]-1-(5-phospho-beta-D-ribosyl)imidazole-4-carboxamide + L-glutamine = D-erythro-1-(imidazol-4-yl)glycerol 3-phosphate + 5-amino-1-(5-phospho-beta-D-ribosyl)imidazole-4-carboxamide + L-glutamate + H(+). The protein operates within amino-acid biosynthesis; L-histidine biosynthesis; L-histidine from 5-phospho-alpha-D-ribose 1-diphosphate: step 5/9. Its function is as follows. IGPS catalyzes the conversion of PRFAR and glutamine to IGP, AICAR and glutamate. The HisF subunit catalyzes the cyclization activity that produces IGP and AICAR from PRFAR using the ammonia provided by the HisH subunit. The sequence is that of Imidazole glycerol phosphate synthase subunit HisF from Gloeobacter violaceus (strain ATCC 29082 / PCC 7421).